Reading from the N-terminus, the 292-residue chain is Large ribosomal subunit protein bL19m (292 aa).

The interval 40–61 (PVRQQSTGPSEPGAFQPPPKPV) is disordered. Residue Ser-77 is modified to Phosphoserine.

Belongs to the bacterial ribosomal protein bL19 family. As to quaternary structure, component of the mitochondrial ribosome large subunit (39S) which comprises a 16S rRNA and about 50 distinct proteins.

It localises to the mitochondrion. This chain is Large ribosomal subunit protein bL19m (MRPL19), found in Pongo abelii (Sumatran orangutan).